Here is an 87-residue protein sequence, read N- to C-terminus: Kappa-4-bungarotoxin (87 aa).

The N-terminal stretch at 1–21 (MKTLLLTLVVVTIVCLDLGYT) is a signal peptide. 5 disulfide bridges follow: Cys-24–Cys-42, Cys-35–Cys-63, Cys-48–Cys-52, Cys-67–Cys-79, and Cys-80–Cys-85.

The protein belongs to the three-finger toxin family. Long-chain subfamily. Kappa-neurotoxin sub-subfamily. Homo- and heterodimer; non-covalently linked. As to expression, expressed by the venom gland.

The protein localises to the secreted. Functionally, postsynaptic neurotoxin that binds and inhibits neuronal nicotinic acetylcholine receptors (nAChR) with high affinity (IC(50)&lt;100 nM). Is a selective, and slowly reversible antagonist of alpha-3/CHRNA3-containing and some alpha-4/CHRNA4-containing AChRs. The sequence is that of Kappa-4-bungarotoxin from Bungarus multicinctus (Many-banded krait).